Here is a 715-residue protein sequence, read N- to C-terminus: Fatty acid oxidation complex subunit alpha (715 aa).

The interval 1–190 is enoyl-CoA hydratase/isomerase; that stretch reads MIYEGKAITV…KVGAVDAVVA (190 aa). Aspartate 297 provides a ligand contact to substrate. A 3-hydroxyacyl-CoA dehydrogenase region spans residues 312–715; sequence HDVKQAAVLG…MAKNGQRFFN (404 aa). NAD(+)-binding positions include methionine 325, aspartate 344, 401–403, lysine 408, and serine 430; that span reads VVE. The For 3-hydroxyacyl-CoA dehydrogenase activity role is filled by histidine 451. NAD(+) is bound at residue asparagine 454. Positions 501 and 660 each coordinate substrate.

It in the N-terminal section; belongs to the enoyl-CoA hydratase/isomerase family. In the C-terminal section; belongs to the 3-hydroxyacyl-CoA dehydrogenase family. Heterotetramer of two alpha chains (FadB) and two beta chains (FadA).

The catalysed reaction is a (3S)-3-hydroxyacyl-CoA + NAD(+) = a 3-oxoacyl-CoA + NADH + H(+). It carries out the reaction a (3S)-3-hydroxyacyl-CoA = a (2E)-enoyl-CoA + H2O. The enzyme catalyses a 4-saturated-(3S)-3-hydroxyacyl-CoA = a (3E)-enoyl-CoA + H2O. It catalyses the reaction (3S)-3-hydroxybutanoyl-CoA = (3R)-3-hydroxybutanoyl-CoA. The catalysed reaction is a (3Z)-enoyl-CoA = a 4-saturated (2E)-enoyl-CoA. It carries out the reaction a (3E)-enoyl-CoA = a 4-saturated (2E)-enoyl-CoA. It functions in the pathway lipid metabolism; fatty acid beta-oxidation. Functionally, involved in the aerobic and anaerobic degradation of long-chain fatty acids via beta-oxidation cycle. Catalyzes the formation of 3-oxoacyl-CoA from enoyl-CoA via L-3-hydroxyacyl-CoA. It can also use D-3-hydroxyacyl-CoA and cis-3-enoyl-CoA as substrate. The protein is Fatty acid oxidation complex subunit alpha of Pseudomonas putida (strain ATCC 47054 / DSM 6125 / CFBP 8728 / NCIMB 11950 / KT2440).